The chain runs to 152 residues: MNFEGKLVGTDLKVAIVVSRFNDFITNRLLDGAKDTLVRHGVEDSNIDVAYVPGAFEIPLVSKKLAQKGEYDAVITLGCVIRGATSHYDYVCNEVAKGVSKANDVSDIPVIFGVLTTESIEQAVERAGTKAGNKGAEAAVSAIEMANLLKQF.

5-amino-6-(D-ribitylamino)uracil contacts are provided by residues Phe-21, 55–57 (AFE), and 79–81 (CVI). A (2S)-2-hydroxy-3-oxobutyl phosphate-binding site is contributed by 84–85 (AT). His-87 serves as the catalytic Proton donor. Residue Phe-112 participates in 5-amino-6-(D-ribitylamino)uracil binding. Arg-126 is a (2S)-2-hydroxy-3-oxobutyl phosphate binding site.

This sequence belongs to the DMRL synthase family. In terms of assembly, forms an icosahedral capsid composed of 60 subunits, arranged as a dodecamer of pentamers.

It carries out the reaction (2S)-2-hydroxy-3-oxobutyl phosphate + 5-amino-6-(D-ribitylamino)uracil = 6,7-dimethyl-8-(1-D-ribityl)lumazine + phosphate + 2 H2O + H(+). The protein operates within cofactor biosynthesis; riboflavin biosynthesis; riboflavin from 2-hydroxy-3-oxobutyl phosphate and 5-amino-6-(D-ribitylamino)uracil: step 1/2. Catalyzes the formation of 6,7-dimethyl-8-ribityllumazine by condensation of 5-amino-6-(D-ribitylamino)uracil with 3,4-dihydroxy-2-butanone 4-phosphate. This is the penultimate step in the biosynthesis of riboflavin. This Staphylococcus haemolyticus (strain JCSC1435) protein is 6,7-dimethyl-8-ribityllumazine synthase.